Here is a 351-residue protein sequence, read N- to C-terminus: Protein Maqu_2141 (351 aa).

It belongs to the proline racemase family.

Functionally, displays neither proline racemase activity nor trans-4-hydroxy-L-proline (t4LHyp) epimerase activity nor t3LHyp dehydratase activity. The chain is Protein Maqu_2141 from Marinobacter nauticus (strain ATCC 700491 / DSM 11845 / VT8) (Marinobacter aquaeolei).